The following is a 1028-amino-acid chain: Antigenic heat-stable 120 kDa protein (1028 aa).

Composition is skewed to polar residues over residues 359 to 384 and 391 to 400; these read GQSK…QYKQ and PTNQPLQPET. The tract at residues 359-405 is disordered; the sequence is GQSKEQPLITPQQTTSSSVEPPQYKQQVPPITPTNQPLQPETSQMQQ.

It localises to the cytoplasm. This Rickettsia africae protein is Antigenic heat-stable 120 kDa protein (sca4).